The primary structure comprises 344 residues: Phosphoribosylformylglycinamidine cyclo-ligase (344 aa).

This sequence belongs to the AIR synthase family.

Its subcellular location is the cytoplasm. The enzyme catalyses 2-formamido-N(1)-(5-O-phospho-beta-D-ribosyl)acetamidine + ATP = 5-amino-1-(5-phospho-beta-D-ribosyl)imidazole + ADP + phosphate + H(+). It participates in purine metabolism; IMP biosynthesis via de novo pathway; 5-amino-1-(5-phospho-D-ribosyl)imidazole from N(2)-formyl-N(1)-(5-phospho-D-ribosyl)glycinamide: step 2/2. This chain is Phosphoribosylformylglycinamidine cyclo-ligase, found in Anaeromyxobacter sp. (strain Fw109-5).